The chain runs to 215 residues: MTKSISIEHLQFDEKGLIPAIVQDHQSGQVLTLAYMNSDSITKTIETNETWFYSRKRQELWNKGATSGNKQTVKQISFDCDADAVLVLVDAQGPACHTGEESCFYEDLYKNDVALLQIIPQVSAKIKERHEHPVEGAYTSYLFEKGVDKILKKIGEEATEVVIAAKNEDKQELTSELSDLLYHSLVLMEQQGVTLEDIKKELYKRHVEKEGQQRE.

The segment at 1–118 is phosphoribosyl-AMP cyclohydrolase; it reads MTKSISIEHL…YKNDVALLQI (118 aa). A phosphoribosyl-ATP pyrophosphohydrolase region spans residues 119-215; the sequence is IPQVSAKIKE…HVEKEGQQRE (97 aa).

This sequence in the N-terminal section; belongs to the PRA-CH family. The protein in the C-terminal section; belongs to the PRA-PH family.

Its subcellular location is the cytoplasm. It catalyses the reaction 1-(5-phospho-beta-D-ribosyl)-ATP + H2O = 1-(5-phospho-beta-D-ribosyl)-5'-AMP + diphosphate + H(+). The catalysed reaction is 1-(5-phospho-beta-D-ribosyl)-5'-AMP + H2O = 1-(5-phospho-beta-D-ribosyl)-5-[(5-phospho-beta-D-ribosylamino)methylideneamino]imidazole-4-carboxamide. The protein operates within amino-acid biosynthesis; L-histidine biosynthesis; L-histidine from 5-phospho-alpha-D-ribose 1-diphosphate: step 2/9. It functions in the pathway amino-acid biosynthesis; L-histidine biosynthesis; L-histidine from 5-phospho-alpha-D-ribose 1-diphosphate: step 3/9. This Oceanobacillus iheyensis (strain DSM 14371 / CIP 107618 / JCM 11309 / KCTC 3954 / HTE831) protein is Histidine biosynthesis bifunctional protein HisIE.